The primary structure comprises 149 residues: MQVILLDKVAHLGTVGDQVTVKSGYARNFLIPQGKAVMATAANIAHFEARRAELEAKAAAVLSAAKERAAKIAAIGAVSVSATAGDDGRLFGSISAKDIADALVAAGIEVTKSEVRLGEGPLRTTGEHEVKVHLHAEVNAMVTVNVVAE.

It belongs to the bacterial ribosomal protein bL9 family.

In terms of biological role, binds to the 23S rRNA. The polypeptide is Large ribosomal subunit protein bL9 (Haemophilus ducreyi (strain 35000HP / ATCC 700724)).